We begin with the raw amino-acid sequence, 191 residues long: Dephospho-CoA kinase (191 aa).

Residues A3–V191 form the DPCK domain. A11–F16 serves as a coordination point for ATP.

This sequence belongs to the CoaE family.

It localises to the cytoplasm. The catalysed reaction is 3'-dephospho-CoA + ATP = ADP + CoA + H(+). It functions in the pathway cofactor biosynthesis; coenzyme A biosynthesis; CoA from (R)-pantothenate: step 5/5. In terms of biological role, catalyzes the phosphorylation of the 3'-hydroxyl group of dephosphocoenzyme A to form coenzyme A. The chain is Dephospho-CoA kinase from Rickettsia prowazekii (strain Madrid E).